The chain runs to 231 residues: 7-cyano-7-deazaguanine synthase (231 aa).

L8–A18 is an ATP binding site. Zn(2+) is bound by residues C189, C197, C200, and C203.

The protein belongs to the QueC family. Zn(2+) serves as cofactor.

It catalyses the reaction 7-carboxy-7-deazaguanine + NH4(+) + ATP = 7-cyano-7-deazaguanine + ADP + phosphate + H2O + H(+). It participates in purine metabolism; 7-cyano-7-deazaguanine biosynthesis. Catalyzes the ATP-dependent conversion of 7-carboxy-7-deazaguanine (CDG) to 7-cyano-7-deazaguanine (preQ(0)). In Synechococcus elongatus (strain ATCC 33912 / PCC 7942 / FACHB-805) (Anacystis nidulans R2), this protein is 7-cyano-7-deazaguanine synthase.